Reading from the N-terminus, the 688-residue chain is Potassium-transporting ATPase ATP-binding subunit (688 aa).

The next 4 membrane-spanning stretches (helical) occupy residues 35–55 (VMMV…VQFA), 62–82 (AVFS…ANLA), 219–239 (IALS…VVTL), and 260–280 (VLVA…LSAI). The active-site 4-aspartylphosphate intermediate is the D313. Residues D350, E354, 383 to 390 (FSAQTRMS), and K401 each bind ATP. Positions 524 and 528 each coordinate Mg(2+). The next 3 helical transmembrane spans lie at 594–614 (FAIL…LNLM), 622–642 (AILS…PLAL), and 668–688 (VVLP…MGWI).

It belongs to the cation transport ATPase (P-type) (TC 3.A.3) family. Type IA subfamily. In terms of assembly, the system is composed of three essential subunits: KdpA, KdpB and KdpC.

Its subcellular location is the cell inner membrane. The enzyme catalyses K(+)(out) + ATP + H2O = K(+)(in) + ADP + phosphate + H(+). Part of the high-affinity ATP-driven potassium transport (or Kdp) system, which catalyzes the hydrolysis of ATP coupled with the electrogenic transport of potassium into the cytoplasm. This subunit is responsible for energy coupling to the transport system and for the release of the potassium ions to the cytoplasm. The protein is Potassium-transporting ATPase ATP-binding subunit of Tolumonas auensis (strain DSM 9187 / NBRC 110442 / TA 4).